The chain runs to 229 residues: Potassium/proton antiporter CemA (229 aa).

3 consecutive transmembrane segments (helical) span residues 6–26 (AFIP…ISLC), 107–127 (ILHF…SFWA), and 189–209 (ILSG…KYWI).

Belongs to the CemA family.

The protein resides in the plastid. The protein localises to the chloroplast inner membrane. The catalysed reaction is K(+)(in) + H(+)(out) = K(+)(out) + H(+)(in). Contributes to K(+)/H(+) antiport activity by supporting proton efflux to control proton extrusion and homeostasis in chloroplasts in a light-dependent manner to modulate photosynthesis. Prevents excessive induction of non-photochemical quenching (NPQ) under continuous-light conditions. Indirectly promotes efficient inorganic carbon uptake into chloroplasts. The chain is Potassium/proton antiporter CemA from Crucihimalaya wallichii (Rock-cress).